A 662-amino-acid polypeptide reads, in one-letter code: MLFIFKNAIREIEQYFANTLSIRRMETREAAERGGERVARYDELLQFIRFCITGENHPIRLPAAPMYLDWIATAELEHGLTPKVENRFLGVVAIDGLPAESWPGILNSLDLMPLTYRWSSRFIFLDAEEARQKLERTRKKWQQKVRPFFDQLFQTQSRSVDRDAMTMVAETEDAIAQASSQLVAYGYYTPVIILFDSDREALQEKAEAIRRLIQAEGFGARIETLNATEAYLGSLPGNWYCNIREPLINTSNLADLIPLNSVWSGSPVAPCPFYPPNSPSLMQVASGSTPFRLNLHVDDVGHTLIFGPTGSGKSTLLALIAAQFRRYDRSQIFAFDKGSALLPLTLAAGGDHYEIGGDNAEGRKALAFCPLSDLESDADRAWAAEWIEMLVALQGVTITPDHRNAMSRQVTLMASAPGRSLSDFVSGVQMREIKDALHHYTVDGPMGQLLDAEHDGLSLGAFQTFEIEQLMNMGERNLVPVLTYLFRRIEKLLDGSPSVIVLDEAWLMLGHPVFRAKIREWLKVLRKANCAVVLATQSISDAERSGIIDVLKESCPTKICLPNGAAREPGTREFYERIGFNERQIEIISNATPKREYYVVTPEGRRLFDMALGPVALSFVGASGKEDLNRIRTLHSEYDRDWPVHWLQMRGFHDAASLFNVE.

307 to 314 serves as a coordination point for ATP; that stretch reads GPTGSGKS.

Belongs to the TrbE/VirB4 family.

The polypeptide is Probable conjugal transfer protein TrbE part 2 (trbEB) (Sinorhizobium fredii (strain NBRC 101917 / NGR234)).